The primary structure comprises 215 residues: Urease accessory protein UreG 2 (215 aa).

11–18 provides a ligand contact to GTP; sequence GPVGSGKT.

It belongs to the SIMIBI class G3E GTPase family. UreG subfamily. In terms of assembly, homodimer. UreD, UreF and UreG form a complex that acts as a GTP-hydrolysis-dependent molecular chaperone, activating the urease apoprotein by helping to assemble the nickel containing metallocenter of UreC. The UreE protein probably delivers the nickel.

The protein localises to the cytoplasm. In terms of biological role, facilitates the functional incorporation of the urease nickel metallocenter. This process requires GTP hydrolysis, probably effectuated by UreG. This is Urease accessory protein UreG 2 from Methylorubrum populi (strain ATCC BAA-705 / NCIMB 13946 / BJ001) (Methylobacterium populi).